Here is a 276-residue protein sequence, read N- to C-terminus: 2-dehydro-3-deoxyphosphooctonate aldolase (276 aa).

Belongs to the KdsA family.

The protein localises to the cytoplasm. The enzyme catalyses D-arabinose 5-phosphate + phosphoenolpyruvate + H2O = 3-deoxy-alpha-D-manno-2-octulosonate-8-phosphate + phosphate. It functions in the pathway carbohydrate biosynthesis; 3-deoxy-D-manno-octulosonate biosynthesis; 3-deoxy-D-manno-octulosonate from D-ribulose 5-phosphate: step 2/3. The protein operates within bacterial outer membrane biogenesis; lipopolysaccharide biosynthesis. This Xanthomonas oryzae pv. oryzae (strain MAFF 311018) protein is 2-dehydro-3-deoxyphosphooctonate aldolase.